Reading from the N-terminus, the 323-residue chain is Olfactory receptor 51S1 (323 aa).

The Extracellular portion of the chain corresponds to 1–33 (MSTLPTQIAPNSSTSMAPTFLLVGMPGLSGAPS). Asparagine 11 is a glycosylation site (N-linked (GlcNAc...) asparagine). Residues 34–54 (WWTLPLIAVYLLSALGNGTIL) traverse the membrane as a helical segment. Topologically, residues 55–62 (WIIALQPA) are cytoplasmic. Residues 63–83 (LHRPMHFFLFLLSVSDIGLVT) traverse the membrane as a helical segment. At 84–107 (ALMPTLLGIALAGAHTVPASACLL) the chain is on the extracellular side. Cysteines 105 and 197 form a disulfide. The helical transmembrane segment at 108–128 (QMVFIHVFSVMESSVLLAMSI) threads the bilayer. The Cytoplasmic portion of the chain corresponds to 129–147 (DRALAICRPLHYPALLTNG). A helical membrane pass occupies residues 148 to 168 (VISKISLAISFRCLGLHLPLP). Residues 169-203 (FLLAYMPYCLPQVLTHSYCLHPDVARLACPEAWGA) are Extracellular-facing. The chain crosses the membrane as a helical span at residues 204–224 (AYSLFVVLSAMGLDPLLIFFS). Residues 225-244 (YGLIGKVLQGVESREDRWKA) are Cytoplasmic-facing. Residues 245-265 (GQTCAAHLSAVLLFYIPMILL) form a helical membrane-spanning segment. Over 266 to 280 (ALINHPELPITQHTH) the chain is Extracellular. Residues 281-301 (TLLSYVHFLLPPLINPILYSV) traverse the membrane as a helical segment. Residues 302 to 323 (KMKEIRKRILNRLQPRKVGGAQ) lie on the Cytoplasmic side of the membrane.

Belongs to the G-protein coupled receptor 1 family.

It is found in the cell membrane. Functionally, odorant receptor. In Homo sapiens (Human), this protein is Olfactory receptor 51S1 (OR51S1).